The sequence spans 593 residues: High affinity cGMP-specific 3',5'-cyclic phosphodiesterase 9A (593 aa).

The disordered stretch occupies residues 87-141; sequence SAGVEDKRTTSRGQSAERPLRDRRVVGLEQPRREGAFESGQVEPRPREPQGCYQE. Residues 104 to 122 are compositionally biased toward basic and acidic residues; it reads RPLRDRRVVGLEQPRREGA. Residues 236–557 enclose the PDEase domain; it reads PRRDVPTYPK…DRYEELKRID (322 aa). The active-site Proton donor is His312. 312–316 is a binding site for 3',5'-cyclic GMP; that stretch reads HNFRH. His316, His352, and Asp353 together coordinate Zn(2+). Asp353 lines the 3',5'-cyclic GMP pocket. Asp353 contributes to the Mg(2+) binding site. Ser379 carries the phosphoserine modification. 3',5'-cyclic GMP is bound by residues Asp462, Tyr484, and 512–513; that span reads AQ. Asp462 serves as a coordination point for Zn(2+). Residues 564-593 form a disordered region; it reads QKKTDSLTSGATEKSRERSRDVKNSEGDCA. Over residues 576–593 the composition is skewed to basic and acidic residues; sequence EKSRERSRDVKNSEGDCA.

Belongs to the cyclic nucleotide phosphodiesterase family. PDE9 subfamily. Homodimer. The cofactor is Zn(2+). Requires Mg(2+) as cofactor. As to expression, expressed in all tissues examined (testis, brain, small intestine, skeletal muscle, heart, lung, thymus, spleen, placenta, kidney, liver, pancreas, ovary and prostate) except blood. Highest levels in brain, heart, kidney, spleen, prostate and colon. Isoform PDE9A12 is found in prostate. In brain, present in the cortex, cerebellum, and subiculum (at protein level). In heart, primarily localizes to myocytes.

It localises to the cell projection. It is found in the ruffle membrane. Its subcellular location is the cytoplasm. The protein resides in the perinuclear region. The protein localises to the golgi apparatus. It localises to the endoplasmic reticulum. It is found in the cell membrane. Its subcellular location is the sarcolemma. It catalyses the reaction 3',5'-cyclic GMP + H2O = GMP + H(+). It functions in the pathway purine metabolism; 3',5'-cyclic GMP degradation; GMP from 3',5'-cyclic GMP: step 1/1. Inhibited by zaprinast; inhibitor is however not specific to PDE9A. Specifically inhibited by BAY-73-6691 (1-(2-chlorophenyl)-6-((2R)-3,3,3- trifluoro-2-methylpropyl)-1,5-dihydro-4H-pyrazolo(3,4-d)pyrimidine-4-one). BAY-73-9961 has two enantiomers, (R) and (S), due to the presence of a chiral center, and both forms vary in their pattern of interaction. Specifically inhibited by PF-4181366 (4H-Pyrazolo[3,4-d]pyrimidin-4-one, 1- cyclopentyl-1,5-dihydro-6-[(3S,4S)-4-methyl- 1-(6-quinoxalinylmethyl)-3-pyrrolidinyl]-one). Specifically inhibited by PF-4449613 ((R)-6-(1-(3-phenoxyazetidin-1-yl)ethyl)-1-(tetrahydro-2H-pyran-4-yl)-1H-pyrazolo[3,4-d]pyrimidin- 4(5H)-one). Specifically inhibited by inhibitor 28 (2-((1-(2-Chlorophenyl)-4-hydroxy-1Hpyrazolo[ 3,4-d]pyrimidin-6-yl)amino)-N-(4- methoxyphenyl)propanamide): inhibitor forms a hydrogen bond with Tyr-484 and Gln-513. Specifically inhibited by 1-Cyclopentyl-6-[(1r)-1-(3-phenoxyazetidin- 1-Yl)ethyl]-1,5-dihydro-4h-pyrazolo[3,4-D] pyrimidin-4-one: inhibitor forms a hydrogen bond with Tyr-484 and Gln-513. Functionally, specifically hydrolyzes the second messenger cGMP, which is a key regulator of many important physiological processes. Highly specific: compared to other members of the cyclic nucleotide phosphodiesterase family, has the highest affinity and selectivity for cGMP. Specifically regulates natriuretic-peptide-dependent cGMP signaling in heart, acting as a regulator of cardiac hypertrophy in myocytes and muscle. Does not regulate nitric oxide-dependent cGMP in heart. Additional experiments are required to confirm whether its ability to hydrolyze natriuretic-peptide-dependent cGMP is specific to heart or is a general feature of the protein. In brain, involved in cognitive function, such as learning and long-term memory. This chain is High affinity cGMP-specific 3',5'-cyclic phosphodiesterase 9A, found in Homo sapiens (Human).